The sequence spans 175 residues: MFIFLFGLAAFFLCLSAEFQKAKALLRAQVFLKGKDLKWDGESCYLPENRAFGLGIAALVCVSVAQIVGNVVICRGFTKTDKTRTTIFCIILLLFSWVNFAVAVTLISVGASMNREQIYGKGWLNRECYLVKDGVFAASGFLSVTTMAAILGAFAFKVKPSLQVENHDKRHTQNV.

Residues 1-24 (MFIFLFGLAAFFLCLSAEFQKAKA) form the signal peptide. At 25–52 (LLRAQVFLKGKDLKWDGESCYLPENRAF) the chain is on the cytoplasmic side. Residues 53–73 (GLGIAALVCVSVAQIVGNVVI) traverse the membrane as a helical segment. At 74–86 (CRGFTKTDKTRTT) the chain is on the extracellular side. A helical membrane pass occupies residues 87 to 107 (IFCIILLLFSWVNFAVAVTLI). The Cytoplasmic portion of the chain corresponds to 108–135 (SVGASMNREQIYGKGWLNRECYLVKDGV). A helical transmembrane segment spans residues 136–156 (FAASGFLSVTTMAAILGAFAF). The Extracellular portion of the chain corresponds to 157-175 (KVKPSLQVENHDKRHTQNV).

It belongs to the DESIGUAL family. In terms of assembly, interacts with CRK19.

The protein resides in the cell membrane. In terms of biological role, together with MWL2, contributes to secondary cell wall biology, specifically lignin biosynthesis. This is Protein MODIFYING WALL LIGNIN-1 from Arabidopsis thaliana (Mouse-ear cress).